Here is a 130-residue protein sequence, read N- to C-terminus: Small ribosomal subunit protein uS8 (130 aa).

This sequence belongs to the universal ribosomal protein uS8 family. Part of the 30S ribosomal subunit. Contacts proteins S5 and S12.

Functionally, one of the primary rRNA binding proteins, it binds directly to 16S rRNA central domain where it helps coordinate assembly of the platform of the 30S subunit. This is Small ribosomal subunit protein uS8 from Pseudoalteromonas atlantica (strain T6c / ATCC BAA-1087).